The primary structure comprises 49 residues: Large ribosomal subunit protein bL33A (49 aa).

This sequence belongs to the bacterial ribosomal protein bL33 family.

The chain is Large ribosomal subunit protein bL33A from Lactobacillus delbrueckii subsp. bulgaricus (strain ATCC 11842 / DSM 20081 / BCRC 10696 / JCM 1002 / NBRC 13953 / NCIMB 11778 / NCTC 12712 / WDCM 00102 / Lb 14).